Reading from the N-terminus, the 185-residue chain is UPF0149 protein PD_0802 (185 aa).

This sequence belongs to the UPF0149 family.

This is UPF0149 protein PD_0802 from Xylella fastidiosa (strain Temecula1 / ATCC 700964).